We begin with the raw amino-acid sequence, 102 residues long: Small ribosomal subunit protein bS18c (102 aa).

Over residues 1–19 the composition is skewed to basic residues; it reads MDKTKRPLRKSKRSFRRRL. Residues 1–26 are disordered; sequence MDKTKRPLRKSKRSFRRRLPPPIGSG.

The protein belongs to the bacterial ribosomal protein bS18 family. Part of the 30S ribosomal subunit.

The protein localises to the plastid. The protein resides in the chloroplast. This Piper cenocladum (Ant piper) protein is Small ribosomal subunit protein bS18c.